The primary structure comprises 253 residues: Hydroxypyruvate/pyruvate aldolase (253 aa).

Histidine 48 serves as the catalytic Proton acceptor. Residues glutamate 151 and aspartate 177 each coordinate a divalent metal cation.

It belongs to the HpcH/HpaI aldolase family. It depends on a divalent metal cation as a cofactor.

The catalysed reaction is D-glyceraldehyde + pyruvate = 2-dehydro-3-deoxy-L-galactonate. In terms of biological role, aldolase which can catalyze in vitro the aldolisation reaction between hydroxypyruvate (HPA) or pyruvate (PA) and D-glyceraldehyde (D-GA). The condensation of pyruvate and D-glyceraldehyde produces 2-dehydro-3-deoxy-L-galactonate. Has weak activity with hydroxypyruvate and D-glyceraldehyde. This Sagittula stellata (strain ATCC 700073 / DSM 11524 / E-37) protein is Hydroxypyruvate/pyruvate aldolase.